The following is a 131-amino-acid chain: POU domain, class 3, transcription factor 3 (131 aa).

The region spanning 1–60 (FTQRRMKLGFTQADVGLALGTLYGNVFSQTTICRFEALQLSFKNMCKLKPLLNKWLEEAD) is the POU-specific domain. The segment at residues 78 to 131 (KRKKRTSIEVSVKGALESHFLKCPKPSAQEITNLADSLQLEKEVVRVWFCNNLQ) is a DNA-binding region (homeobox).

The protein belongs to the POU transcription factor family. Class-3 subfamily. In terms of assembly, homodimer. In terms of tissue distribution, brain.

The protein localises to the nucleus. In terms of biological role, transcription factor that acts synergistically with SOX11 and SOX4. Plays a role in neuronal development. Is implicated in an enhancer activity at the embryonic met-mesencephalic junction; the enhancer element contains the octamer motif (5'-ATTTGCAT-3'). The sequence is that of POU domain, class 3, transcription factor 3 (POU3F3) from Sus scrofa (Pig).